The following is a 407-amino-acid chain: Probable beta-1,3-galactosyltransferase 4 (407 aa).

The chain crosses the membrane as a helical; Signal-anchor for type II membrane protein span at residues 23 to 39; it reads WTLFLCIGFFCAGILFS.

It belongs to the glycosyltransferase 31 family. Mn(2+) is required as a cofactor.

Its subcellular location is the golgi apparatus membrane. It functions in the pathway protein modification; protein glycosylation. Functionally, beta-1,3-galactosyltransferase that transfers galactose from UDP-galactose to substrates with a terminal glycosyl residue. This is Probable beta-1,3-galactosyltransferase 4 (B3GALT4) from Arabidopsis thaliana (Mouse-ear cress).